A 364-amino-acid chain; its full sequence is Cell division protein FtsZ 1 (364 aa).

Residues 47–48, 97–99, 134–136, glutamate 165, arginine 169, and aspartate 212 contribute to the GTP site; these read GA, AGG, and GTG.

This sequence belongs to the FtsZ family. As to quaternary structure, homodimer. Polymerizes to form a dynamic ring structure in a strictly GTP-dependent manner. Interacts directly with several other division proteins.

Its subcellular location is the cytoplasm. Functionally, essential cell division protein that forms a contractile ring structure (Z ring) at the future cell division site. The regulation of the ring assembly controls the timing and the location of cell division. One of the functions of the FtsZ ring is to recruit other cell division proteins to the septum to produce a new cell wall between the dividing cells. Binds GTP and shows GTPase activity. The protein is Cell division protein FtsZ 1 of Methanocaldococcus jannaschii (strain ATCC 43067 / DSM 2661 / JAL-1 / JCM 10045 / NBRC 100440) (Methanococcus jannaschii).